The following is a 127-amino-acid chain: Large ribosomal subunit protein bL12 (127 aa).

A disordered region spans residues 98 to 127 (PKPVKNGVSKEEAEEAKKQLVESGAEVEIK). Over residues 105 to 117 (VSKEEAEEAKKQL) the composition is skewed to basic and acidic residues.

This sequence belongs to the bacterial ribosomal protein bL12 family. Homodimer. Part of the ribosomal stalk of the 50S ribosomal subunit. Forms a multimeric L10(L12)X complex, where L10 forms an elongated spine to which 2 to 4 L12 dimers bind in a sequential fashion. Binds GTP-bound translation factors.

In terms of biological role, forms part of the ribosomal stalk which helps the ribosome interact with GTP-bound translation factors. Is thus essential for accurate translation. The polypeptide is Large ribosomal subunit protein bL12 (Geobacter sulfurreducens (strain ATCC 51573 / DSM 12127 / PCA)).